A 99-amino-acid polypeptide reads, in one-letter code: Large ribosomal subunit protein bL27 (99 aa).

Positions 1 to 12 (MMINNLEALKLF) are excised as a propeptide. The disordered stretch occupies residues 15–36 (HKGGGSTANGRNSAGRRLGAKR).

This sequence belongs to the bacterial ribosomal protein bL27 family. In terms of processing, the N-terminus is cleaved by ribosomal processing cysteine protease Prp.

This is Large ribosomal subunit protein bL27 from Lactobacillus johnsonii (strain CNCM I-12250 / La1 / NCC 533).